The primary structure comprises 121 residues: Regulator of ribonuclease activity B (121 aa).

It belongs to the RraB family. As to quaternary structure, interacts with the C-terminal region of Rne.

It is found in the cytoplasm. In terms of biological role, globally modulates RNA abundance by binding to RNase E (Rne) and regulating its endonucleolytic activity. Can modulate Rne action in a substrate-dependent manner by altering the composition of the degradosome. This is Regulator of ribonuclease activity B from Psychromonas ingrahamii (strain DSM 17664 / CCUG 51855 / 37).